A 349-amino-acid polypeptide reads, in one-letter code: MSASASLPVTRAAAAPRITVLFSTEKPNANTNPYLTQLYDALPDAVQPRFFSMREALLSRYDVLHLHWPEYLLRHPSKMGTLAKQACAALLLMKLQLTGTPVVRTLHNLAPHEDRGWRERALLRWIDQLTRRWIRINATTPVRPPFTDTILHGHYRDWFATMEQSTTLPGRLLHFGLIRPYKGVEVLLDVMRDVQDPRLSLRIVGNPATPXMRTLVETACAQDARISALLAYVEEPVLAREVSACELVVLPYKQMHNSGTLLLALSLARPVLAPWSESNAAIADEVGPGWVFLYEGEFDAALLSGMLDQVRAAPRGPAPDLSQRDWPRIGQLHYRTYLEALGKDGDAAL.

The first 14 residues, 1–14, serve as a signal peptide directing secretion; sequence MSASASLPVTRAAA.

It belongs to the glycosyltransferase 94 family.

The protein resides in the cell inner membrane. The catalysed reaction is beta-D-GlcA-(1-&gt;2)-alpha-D-Man-(1-&gt;3)-beta-D-Glc-(1-&gt;4)-alpha-D-Glc-di-trans,octa-cis-undecaprenyl diphosphate + GDP-alpha-D-mannose = beta-D-Man-(1-&gt;4)-beta-D-GlcA-(1-&gt;2)-alpha-D-Man-(1-&gt;3)-beta-D-Glc-(1-&gt;4)-alpha-D-Glc-di-trans,octa-cis-undecaprenyl diphosphate + GDP + H(+). It participates in glycan biosynthesis; xanthan biosynthesis. Nonprocessive beta-mannosyltransferase that catalyzes the transfer of a mannose residue from GDP-mannose to glucuronic acid-beta-1,2-mannose-alpha-1,3-glucose-beta-1,4-glucose-PP-polyisoprenyl to form the lipid-linked pentasaccharide repeating unit of xanthan, Man-GlcA-Man-Glc(2)-PP-Pol. Is involved in the biosynthesis of the exopolysaccharide xanthan. To a lesser extent, can also use ADP-Man and even GDP-Glc as sugar donor substrates in vitro. Is unable to transfer a Man residue to the free-tetrasaccharide GlcA-Man-Glc(2) used as an acceptor, which indicates that the diphosphate group and the lipid moiety in the acceptor substrate are of major importance for acceptor binding and catalysis. This Xanthomonas campestris pv. campestris protein is GDP-mannose:glycolipid 4-beta-D-mannosyltransferase (gumI).